Consider the following 163-residue polypeptide: Phosphopantetheine adenylyltransferase (163 aa).

Threonine 10 serves as a coordination point for substrate. Residues 10 to 11 (TF) and histidine 18 each bind ATP. Residues lysine 42, leucine 74, and arginine 88 each contribute to the substrate site. ATP-binding positions include 89–91 (GLR), glutamate 99, and 124–130 (NSFISST).

It belongs to the bacterial CoaD family. As to quaternary structure, homohexamer. The cofactor is Mg(2+).

It is found in the cytoplasm. The enzyme catalyses (R)-4'-phosphopantetheine + ATP + H(+) = 3'-dephospho-CoA + diphosphate. The protein operates within cofactor biosynthesis; coenzyme A biosynthesis; CoA from (R)-pantothenate: step 4/5. In terms of biological role, reversibly transfers an adenylyl group from ATP to 4'-phosphopantetheine, yielding dephospho-CoA (dPCoA) and pyrophosphate. This Shewanella baltica (strain OS195) protein is Phosphopantetheine adenylyltransferase.